The sequence spans 343 residues: MSAFTPASEVLLRHSDDFEQSRILFAGDLQDDLPARLDTAASRAHTQQFHHWQVLSRQMGDNARFSLVATVDDVADCDTLIYYWPKNKPEAQFQLMNLLSLLPVGTDIFVVGENRSGVRSAEQMLADYAPLNKVDSARRCGLYFGRLEKQPVFDADKFWGEYSVDGLTVKTLPGVFSRDGLDVGSQLLLSTLTPHTKGKVLDVGCGAGVLSVAFARHSPKIRLTLCDVSAPAVEASRATLAANGVEGEVFASNVFSEVKGRFDMIISNPPFHDGMQTSLDAAQTLIRGAVRHLNSGGELRIVANAFLPYPDVLDETFGFHEVIAQTGRFKVYRAIMTRQAKKG.

Belongs to the methyltransferase superfamily. RsmC family. In terms of assembly, monomer.

The protein localises to the cytoplasm. It carries out the reaction guanosine(1207) in 16S rRNA + S-adenosyl-L-methionine = N(2)-methylguanosine(1207) in 16S rRNA + S-adenosyl-L-homocysteine + H(+). Functionally, specifically methylates the guanine in position 1207 of 16S rRNA in the 30S particle. The chain is Ribosomal RNA small subunit methyltransferase C from Escherichia coli (strain 55989 / EAEC).